We begin with the raw amino-acid sequence, 337 residues long: Heat-inducible transcription repressor HrcA (337 aa).

This sequence belongs to the HrcA family.

In terms of biological role, negative regulator of class I heat shock genes (grpE-dnaK-dnaJ and groELS operons). Prevents heat-shock induction of these operons. In Polaromonas naphthalenivorans (strain CJ2), this protein is Heat-inducible transcription repressor HrcA.